The primary structure comprises 262 residues: Acyl-[acyl-carrier-protein]--UDP-N-acetylglucosamine O-acyltransferase (262 aa).

This sequence belongs to the transferase hexapeptide repeat family. LpxA subfamily. As to quaternary structure, homotrimer.

Its subcellular location is the cytoplasm. The catalysed reaction is a (3R)-hydroxyacyl-[ACP] + UDP-N-acetyl-alpha-D-glucosamine = a UDP-3-O-[(3R)-3-hydroxyacyl]-N-acetyl-alpha-D-glucosamine + holo-[ACP]. Its pathway is glycolipid biosynthesis; lipid IV(A) biosynthesis; lipid IV(A) from (3R)-3-hydroxytetradecanoyl-[acyl-carrier-protein] and UDP-N-acetyl-alpha-D-glucosamine: step 1/6. In terms of biological role, involved in the biosynthesis of lipid A, a phosphorylated glycolipid that anchors the lipopolysaccharide to the outer membrane of the cell. In Paracidovorax citrulli (strain AAC00-1) (Acidovorax citrulli), this protein is Acyl-[acyl-carrier-protein]--UDP-N-acetylglucosamine O-acyltransferase.